A 180-amino-acid chain; its full sequence is Large ribosomal subunit protein uL5c (180 aa).

Belongs to the universal ribosomal protein uL5 family. As to quaternary structure, part of the 50S ribosomal subunit; contacts the 5S rRNA.

The protein resides in the plastid. The protein localises to the chloroplast. Functionally, binds 5S rRNA, forms part of the central protuberance of the 50S subunit. This is Large ribosomal subunit protein uL5c (rpl5) from Oedogonium cardiacum (Filamentous green alga).